The following is a 510-amino-acid chain: MDIRAAEISAILKDQIKNFGQEAEVSEVGQVLSVGDGIARVYGLDNVLAGEMVEFENGTRGMALNLETDNVGVVIFGADREIKEGQTVKRTRSIVDAPVGKGLLGRVVDALGNPIDGKGPIQAVERKRVDVKAPGIIPRKSVHEPMATGLKSIDALIPIGRGQRELIIGDRQTGKTAIALDTILNQKPLNVEGAPESQKLYCVYVAVGQKRSTVAQFVKVLEEQGALEYSVVVAATASDPAPMQYIAPFTGCTIGEYFRDNGMHAVIIYDDLSKQAVAYRQMSLLLRRPPGREAYPGDVFYLHSRLLERAAKLNDEQGNGSLTALPVIETQANDVSAYIPTNVISITDGQIFLETDLFFQGIRPAVNVGLSVSRVGSSAQTKAMKKVAGKIKGELAQYREMAAFAQFGSDLDAATQRLLNRGSRLTELLKQPQFSPLKMEEQVCVIWAGTNGYLDALPLNKVRAFEDGLLALLRGKESGILEAIRTSRDLSDDTAAKLKAVVESYAKTFA.

169 to 176 contacts ATP; sequence GDRQTGKT.

The protein belongs to the ATPase alpha/beta chains family. F-type ATPases have 2 components, CF(1) - the catalytic core - and CF(0) - the membrane proton channel. CF(1) has five subunits: alpha(3), beta(3), gamma(1), delta(1), epsilon(1). CF(0) has four main subunits: a(1), b(1), b'(1) and c(9-12).

It is found in the cell inner membrane. The enzyme catalyses ATP + H2O + 4 H(+)(in) = ADP + phosphate + 5 H(+)(out). Produces ATP from ADP in the presence of a proton gradient across the membrane. The alpha chain is a regulatory subunit. This Rhodopseudomonas palustris (strain ATCC BAA-98 / CGA009) protein is ATP synthase subunit alpha.